A 474-amino-acid chain; its full sequence is Aspartyl/glutamyl-tRNA(Asn/Gln) amidotransferase subunit B (474 aa).

This sequence belongs to the GatB/GatE family. GatB subfamily. As to quaternary structure, heterotrimer of A, B and C subunits.

The enzyme catalyses L-glutamyl-tRNA(Gln) + L-glutamine + ATP + H2O = L-glutaminyl-tRNA(Gln) + L-glutamate + ADP + phosphate + H(+). The catalysed reaction is L-aspartyl-tRNA(Asn) + L-glutamine + ATP + H2O = L-asparaginyl-tRNA(Asn) + L-glutamate + ADP + phosphate + 2 H(+). In terms of biological role, allows the formation of correctly charged Asn-tRNA(Asn) or Gln-tRNA(Gln) through the transamidation of misacylated Asp-tRNA(Asn) or Glu-tRNA(Gln) in organisms which lack either or both of asparaginyl-tRNA or glutaminyl-tRNA synthetases. The reaction takes place in the presence of glutamine and ATP through an activated phospho-Asp-tRNA(Asn) or phospho-Glu-tRNA(Gln). The chain is Aspartyl/glutamyl-tRNA(Asn/Gln) amidotransferase subunit B from Campylobacter curvus (strain 525.92).